The sequence spans 98 residues: Trp operon repressor homolog (98 aa).

Residues 59 to 82 (QRQVSQMLGVGVATITRGSNELKA) mediate DNA binding.

The protein belongs to the TrpR family. Homodimer.

The protein resides in the cytoplasm. Functionally, this protein is an aporepressor. When complexed with L-tryptophan it binds the operator region of the trp operon and prevents the initiation of transcription. This chain is Trp operon repressor homolog, found in Vibrio atlanticus (strain LGP32) (Vibrio splendidus (strain Mel32)).